A 392-amino-acid chain; its full sequence is Integrin-linked kinase-associated serine/threonine phosphatase 2C (392 aa).

M1 is modified (N-acetylmethionine). The tract at residues 1-90 (MDLFGDLPEP…TSEEEKNGSE (90 aa)) is disordered. S13 is modified (phosphoserine). Over residues 56–70 (SGDSGSLATSISQMV) the composition is skewed to polar residues. Over residues 72-90 (TEGKGAKRKTSEEEKNGSE) the composition is skewed to basic and acidic residues. The 283-residue stretch at 108 to 390 (KGYVAERKGE…DNVTVMVVRI (283 aa)) folds into the PPM-type phosphatase domain. Mn(2+) contacts are provided by D152 and G153. An N6-acetyllysine modification is found at K210. The Mn(2+) site is built by D326 and D381.

This sequence belongs to the PP2C family. As to quaternary structure, interacts with ILK. Specific association with ILK is independent of the catalytic activity of either partner. It depends on Mg(2+) as a cofactor. Requires Mn(2+) as cofactor. As to expression, widely expressed. Highest levels expressed in striated muscle. Much lower levels evident in various smooth muscle tissues.

The protein resides in the cytoplasm. It catalyses the reaction O-phospho-L-seryl-[protein] + H2O = L-seryl-[protein] + phosphate. The catalysed reaction is O-phospho-L-threonyl-[protein] + H2O = L-threonyl-[protein] + phosphate. Inhibited rather than stimulated by magnesium. Protein phosphatase that may play a role in regulation of cell cycle progression via dephosphorylation of its substrates whose appropriate phosphorylation states might be crucial for cell proliferation. Selectively associates with integrin linked kinase (ILK), to modulate cell adhesion and growth factor signaling. Inhibits the ILK-GSK3B signaling axis and may play an important role in inhibiting oncogenic transformation. This is Integrin-linked kinase-associated serine/threonine phosphatase 2C (ILKAP) from Homo sapiens (Human).